A 170-amino-acid polypeptide reads, in one-letter code: Inducible metalloproteinase inhibitor protein (170 aa).

The first 19 residues, 1 to 19, serve as a signal peptide directing secretion; that stretch reads MKCLLYLCLWCYCVLVSSS. Residues asparagine 48 and asparagine 149 are each glycosylated (N-linked (GlcNAc...) asparagine).

Cleaved. In terms of processing, five disulfide bonds are present. When artificially cleaved by thermolysin between Asn-56 and Ile-57, the two obtained chains (called heavy and light chains) remain linked. Post-translationally, the N-terminus is blocked.

Functionally, inhibits thermolysin, bacillolysin and pseudolysin, B.polymyxa metalloprotease and human MMP1 and MMP3. No activity on trypsin or cysteine protease papain. The chain is Inducible metalloproteinase inhibitor protein (IMPI) from Galleria mellonella (Greater wax moth).